The sequence spans 267 residues: Integral membrane protein 2C (267 aa).

Phosphothreonine is present on Thr-37. The helical; Signal-anchor for type II membrane protein transmembrane segment at 55–75 (VGGVCYLSMGMVVLLMGLVFA) threads the bilayer. A BRICHOS domain is found at 136–230 (FGGGDPADII…LCNGKDTYRL (95 aa)). A disulfide bridge connects residues Cys-163 and Cys-222. N-linked (GlcNAc...) asparagine glycosylation is present at Asn-169.

The protein belongs to the ITM2 family. As to quaternary structure, interacts with BACE1. Interacts with APP. Interacts with STMN2. Post-translationally, type I membrane-bound, as well as soluble, furin has a pre-eminent role in ITM2C proteolytic processing. PCSK7 and PCSK5 may also be involved although to a lesser extent. The soluble form of PCSK7 is incapable of processing ITM2C. Fails to undergo shedding by ADAM10 and intramembrane cleavage by SPPL2B.

It localises to the lysosome membrane. The protein localises to the cell membrane. Negative regulator of amyloid-beta peptide production. May inhibit the processing of APP by blocking its access to alpha- and beta-secretase. Binding to the beta-secretase-cleaved APP C-terminal fragment is negligible, suggesting that ITM2C is a poor gamma-secretase cleavage inhibitor. May play a role in TNF-induced cell death and neuronal differentiation. The sequence is that of Integral membrane protein 2C (ITM2C) from Macaca fascicularis (Crab-eating macaque).